A 432-amino-acid chain; its full sequence is 5'-deoxyadenosine deaminase (432 aa).

Zn(2+)-binding residues include His63 and His65. 2 residues coordinate substrate: Glu92 and His184. A Zn(2+)-binding site is contributed by His211. Residues Glu214 and Asp299 each contribute to the substrate site. Residue Asp299 participates in Zn(2+) binding.

Belongs to the metallo-dependent hydrolases superfamily. MTA/SAH deaminase family. In terms of assembly, homotetramer. Requires Zn(2+) as cofactor.

It catalyses the reaction 5'-deoxyadenosine + H2O + H(+) = 5'-deoxyinosine + NH4(+). The enzyme catalyses S-adenosyl-L-homocysteine + H2O + H(+) = S-inosyl-L-homocysteine + NH4(+). It carries out the reaction S-methyl-5'-thioadenosine + H2O + H(+) = S-methyl-5'-thioinosine + NH4(+). The catalysed reaction is adenosine + H2O + H(+) = inosine + NH4(+). Its pathway is amino-acid biosynthesis; S-adenosyl-L-methionine biosynthesis. Catalyzes the deamination of three SAM-derived enzymatic products, namely 5'-deoxyadenosine, S-adenosyl-L-homocysteine, and 5'-methylthioadenosine, to produce the inosine analogs. Can also deaminate adenosine. The preferred substrate for this enzyme is 5'-deoxyadenosine, but all these substrates are efficiently deaminated. Likely functions in a S-adenosyl-L-methionine (SAM) recycling pathway from S-adenosyl-L-homocysteine (SAH) produced from SAM-dependent methylation reactions. May also be involved in the recycling of 5'-deoxyadenosine, whereupon the 5'-deoxyribose moiety of 5'-deoxyinosine is further metabolized to deoxyhexoses used for the biosynthesis of aromatic amino acids in methanogens. In Methanosarcina mazei (strain ATCC BAA-159 / DSM 3647 / Goe1 / Go1 / JCM 11833 / OCM 88) (Methanosarcina frisia), this protein is 5'-deoxyadenosine deaminase.